The following is a 228-amino-acid chain: Urease accessory protein UreH (228 aa).

The next 5 membrane-spanning stretches (helical) occupy residues valine 48–methionine 68, serine 79–leucine 99, leucine 130–serine 150, isoleucine 162–isoleucine 182, and alanine 196–leucine 216.

The protein belongs to the NiCoT transporter (TC 2.A.52) family.

The protein localises to the cell membrane. In terms of biological role, probably facilitates nickel incorporation. May constitute a multicomponent high-affinity nickel transporter. Not essential for the expression of catalytically active urease. This Bacillus sp. (strain TB-90) protein is Urease accessory protein UreH (ureH).